A 282-amino-acid chain; its full sequence is 4-deoxy-L-threo-5-hexosulose-uronate ketol-isomerase 2 (282 aa).

Residues histidine 200, histidine 202, glutamate 207, and histidine 249 each coordinate Zn(2+).

The protein belongs to the KduI family. The cofactor is Zn(2+).

The enzyme catalyses 5-dehydro-4-deoxy-D-glucuronate = 3-deoxy-D-glycero-2,5-hexodiulosonate. Its pathway is glycan metabolism; pectin degradation; 2-dehydro-3-deoxy-D-gluconate from pectin: step 4/5. Its function is as follows. Catalyzes the isomerization of 5-dehydro-4-deoxy-D-glucuronate to 3-deoxy-D-glycero-2,5-hexodiulosonate. The protein is 4-deoxy-L-threo-5-hexosulose-uronate ketol-isomerase 2 (kduI2) of Rhizobium meliloti (strain 1021) (Ensifer meliloti).